A 497-amino-acid chain; its full sequence is Ganglioside-induced differentiation-associated protein 2 (497 aa).

Residues 43–223 (RSPFLYNKDV…TYQKLLPLYF (181 aa)) form the Macro domain. Residues 252-273 (ERQIRISEKPGAPEDNQEEEDE) form a disordered region. Residues 253 to 263 (RQIRISEKPGA) are compositionally biased toward basic and acidic residues. The residue at position 280 (S280) is a Phosphoserine. The CRAL-TRIO domain maps to 333 to 481 (DIASLKALYQ…FPPFVLEYDA (149 aa)).

Belongs to the GDAP2 family.

In Homo sapiens (Human), this protein is Ganglioside-induced differentiation-associated protein 2 (GDAP2).